Consider the following 691-residue polypeptide: Solute carrier family 28 member 3 (691 aa).

Residues 1-78 (MELRSTAAPR…HMEDDDEEMQ (78 aa)) are disordered. The Cytoplasmic segment spans residues 1 to 102 (MELRSTAAPR…FCRKHKTTLR (102 aa)). Over residues 21–30 (NEENFLENEN) the composition is skewed to low complexity. Over residues 31–42 (TSGNNSIRSRAV) the composition is skewed to polar residues. A compositionally biased stretch (basic and acidic residues) spans 43 to 54 (QSREHTNTKQDE). Residues 103–123 (HIIWGILLAGYLVMVISACVL) traverse the membrane as a helical segment. At 124-128 (NFHRA) the chain is on the extracellular side. The helical transmembrane segment at 129–149 (LPLFVITVAAIFFVVWDHLMA) threads the bilayer. Residues 150 to 173 (KYEHRIDEMLSPGRRLLNSHWFWL) lie on the Cytoplasmic side of the membrane. A helical transmembrane segment spans residues 174–194 (KWVIWSSLVLAVIFWLAFDTA). Over 195-197 (KLG) the chain is Extracellular. Residues 198 to 219 (QQQLVSFGGLIMYIVLLFLFSK) traverse the membrane as a helical segment. The Cytoplasmic segment spans residues 220 to 227 (YPTRVYWR). The chain crosses the membrane as a helical span at residues 228–247 (PVLWGIGLQFLLGLLILRTD). Residues 248–284 (PGFIAFDWLGRQVQTFLEYTDAGASFVFGEKYKDHFF) are Extracellular-facing. A helical transmembrane segment spans residues 285-305 (AFKVLPIVVFFSTVMSMLYYL). At 306–329 (GLMQWIIRKVGWIMLVTTGSSPIE) the chain is on the cytoplasmic side. The helical intramembrane region spans 330–348 (SVVASGNIFVGQTESPLLV). The Cytoplasmic portion of the chain corresponds to 349–361 (RPYLPYITKSELH). Residues 362–384 (AIMTAGFSTIAGSVLGAYISFGV) form a helical membrane-spanning segment. Residues 385 to 386 (PS) lie on the Extracellular side of the membrane. The helical transmembrane segment at 387 to 408 (SHLLTASVMSAPASLAAAKLFW) threads the bilayer. Residues 409–443 (PETEKPKITLKNAMKMESGDSGNLLEAATQGASSS) lie on the Cytoplasmic side of the membrane. A helical transmembrane segment spans residues 444-469 (ISLVANIAVNLIAFLALLSFMNSALS). Residues 470–507 (WFGNMFDYPQLSFELICSYIFMPFSFMMGVEWQDSFMV) are Extracellular-facing. Positions 508-527 (ARLIGYKTFFNEFVAYEHLS) form an intramembrane region, helical. Topologically, residues 528-566 (KWIHLRKEGGPKFVNGVQQYISIRSEIIATYALCGFANI) are extracellular. The helical transmembrane segment at 567–577 (GSLGIVIGGLT) threads the bilayer. Residues 578 to 590 (SMAPSRKRDIASG) lie on the Cytoplasmic side of the membrane. A helical membrane pass occupies residues 591–613 (AVRALIAGTVACFMTACIAGILS). The Extracellular portion of the chain corresponds to 614-691 (STPVDINCHH…FNCNGISNTF (78 aa)).

Belongs to the concentrative nucleoside transporter (CNT) (TC 2.A.41) family. In terms of assembly, homotrimer. In terms of tissue distribution, expressed in pancreas, bone marrow, trachea, mammary gland, liver, prostate, and regions of intestine, brain, lung, placenta, testis, kidney, and heart.

Its subcellular location is the cell membrane. The protein localises to the endoplasmic reticulum membrane. It catalyses the reaction thymidine(out) + 2 Na(+)(out) = thymidine(in) + 2 Na(+)(in). The enzyme catalyses cytidine(out) + 2 Na(+)(out) = cytidine(in) + 2 Na(+)(in). It carries out the reaction uridine(out) + 2 Na(+)(out) = uridine(in) + 2 Na(+)(in). The catalysed reaction is adenosine(out) + 2 Na(+)(out) = adenosine(in) + 2 Na(+)(in). It catalyses the reaction guanosine(out) + 2 Na(+)(out) = guanosine(in) + 2 Na(+)(in). The enzyme catalyses inosine(out) + 2 Na(+)(out) = inosine(in) + 2 Na(+)(in). Functionally, sodium-dependent, pyrimidine- and purine-selective. Involved in the homeostasis of endogenous nucleosides. Exhibits the transport characteristics of the nucleoside transport system cib or N3 subtype (N3/cib) (with marked transport of both thymidine and inosine). Employs a 2:1 sodium/nucleoside ratio. Transports uridine. Also able to transport gemcitabine, 3'-azido-3'-deoxythymidine (AZT), ribavirin and 3-deazauridine. This Homo sapiens (Human) protein is Solute carrier family 28 member 3 (SLC28A3).